The primary structure comprises 126 residues: Large ribosomal subunit protein bL12 (126 aa).

This sequence belongs to the bacterial ribosomal protein bL12 family. Homodimer. Part of the ribosomal stalk of the 50S ribosomal subunit. Forms a multimeric L10(L12)X complex, where L10 forms an elongated spine to which 2 to 4 L12 dimers bind in a sequential fashion. Binds GTP-bound translation factors.

Functionally, forms part of the ribosomal stalk which helps the ribosome interact with GTP-bound translation factors. Is thus essential for accurate translation. This is Large ribosomal subunit protein bL12 from Koribacter versatilis (strain Ellin345).